Here is a 496-residue protein sequence, read N- to C-terminus: Glycerol kinase (496 aa).

Thr-11 provides a ligand contact to ADP. Residues Thr-11, Thr-12, and Ser-13 each coordinate ATP. Residue Thr-11 participates in sn-glycerol 3-phosphate binding. Position 15 (Arg-15) interacts with ADP. Residues Arg-81, Glu-82, Tyr-133, and Asp-242 each coordinate sn-glycerol 3-phosphate. Positions 81, 82, 133, 242, and 243 each coordinate glycerol. ADP-binding residues include Thr-264 and Gly-307. ATP-binding residues include Thr-264, Gly-307, Gln-311, and Gly-408. Positions 408 and 412 each coordinate ADP.

It belongs to the FGGY kinase family.

The catalysed reaction is glycerol + ATP = sn-glycerol 3-phosphate + ADP + H(+). It participates in polyol metabolism; glycerol degradation via glycerol kinase pathway; sn-glycerol 3-phosphate from glycerol: step 1/1. Inhibited by fructose 1,6-bisphosphate (FBP). Its function is as follows. Key enzyme in the regulation of glycerol uptake and metabolism. Catalyzes the phosphorylation of glycerol to yield sn-glycerol 3-phosphate. This chain is Glycerol kinase, found in Trichlorobacter lovleyi (strain ATCC BAA-1151 / DSM 17278 / SZ) (Geobacter lovleyi).